The following is a 469-amino-acid chain: tRNA-2-methylthio-N(6)-dimethylallyladenosine synthase (469 aa).

One can recognise an MTTase N-terminal domain in the interval 22 to 142 (RKVFIKTYGC…LPEALRRAKE (121 aa)). Residues Cys-31, Cys-67, Cys-105, Cys-183, Cys-187, and Cys-190 each contribute to the [4Fe-4S] cluster site. One can recognise a Radical SAM core domain in the interval 169–401 (RARGVTAFLT…QALLLKQQQE (233 aa)). Residues 404-466 (ESCIGKEIDL…TNSLFAERAE (63 aa)) enclose the TRAM domain.

This sequence belongs to the methylthiotransferase family. MiaB subfamily. In terms of assembly, monomer. [4Fe-4S] cluster is required as a cofactor.

Its subcellular location is the cytoplasm. The enzyme catalyses N(6)-dimethylallyladenosine(37) in tRNA + (sulfur carrier)-SH + AH2 + 2 S-adenosyl-L-methionine = 2-methylsulfanyl-N(6)-dimethylallyladenosine(37) in tRNA + (sulfur carrier)-H + 5'-deoxyadenosine + L-methionine + A + S-adenosyl-L-homocysteine + 2 H(+). Its function is as follows. Catalyzes the methylthiolation of N6-(dimethylallyl)adenosine (i(6)A), leading to the formation of 2-methylthio-N6-(dimethylallyl)adenosine (ms(2)i(6)A) at position 37 in tRNAs that read codons beginning with uridine. The polypeptide is tRNA-2-methylthio-N(6)-dimethylallyladenosine synthase (Rhizobium etli (strain ATCC 51251 / DSM 11541 / JCM 21823 / NBRC 15573 / CFN 42)).